The following is a 481-amino-acid chain: UDP-N-acetylmuramoyl-L-alanyl-D-glutamate--L-lysine ligase (481 aa).

Ser-42 is a binding site for UDP-N-acetyl-alpha-D-muramoyl-L-alanyl-D-glutamate. Residue Gly-118–Thr-124 participates in ATP binding. Residues Gln-158, Thr-160–Thr-161, Ser-187, and Arg-195 each bind UDP-N-acetyl-alpha-D-muramoyl-L-alanyl-D-glutamate. The residue at position 229 (Lys-229) is an N6-carboxylysine. The short motif at Asp-404–Asn-407 is the L-lysine recognition motif element.

This sequence belongs to the MurCDEF family. MurE subfamily. In terms of processing, carboxylation is probably crucial for Mg(2+) binding and, consequently, for the gamma-phosphate positioning of ATP.

The protein resides in the cytoplasm. The catalysed reaction is UDP-N-acetyl-alpha-D-muramoyl-L-alanyl-D-glutamate + L-lysine + ATP = UDP-N-acetyl-alpha-D-muramoyl-L-alanyl-gamma-D-glutamyl-L-lysine + ADP + phosphate + H(+). It participates in cell wall biogenesis; peptidoglycan biosynthesis. In terms of biological role, catalyzes the addition of L-lysine to the nucleotide precursor UDP-N-acetylmuramoyl-L-alanyl-D-glutamate (UMAG) in the biosynthesis of bacterial cell-wall peptidoglycan. The polypeptide is UDP-N-acetylmuramoyl-L-alanyl-D-glutamate--L-lysine ligase (Streptococcus pyogenes serotype M6 (strain ATCC BAA-946 / MGAS10394)).